The chain runs to 298 residues: Zinc transport system membrane protein TroC (298 aa).

The next 8 helical transmembrane spans lie at 16 to 36 (VVLGTLFLGLGSGLVGSFAVL), 41 to 61 (LFGDAVSHATLPGIVIAFLLT), 68 to 88 (ILLLGAALSGLVGTVVMLMVM), 97 to 117 (GAQGIVLGVFLGFGFLLLTHV), 144 to 164 (VLLIIAMEVVIGLLVLLFWKE), 187 to 207 (FMLTALIVVAVVVGVQAVGVI), 229 to 249 (VLCALAALFGGVSGVSGSVVS), and 255 to 275 (LSTGPVIVLVLTGIALVSIML).

This sequence belongs to the ABC-3 integral membrane protein family.

Its subcellular location is the cell membrane. Part of an ATP-driven transport system TroABCD for zinc. This Treponema pallidum (strain Nichols) protein is Zinc transport system membrane protein TroC (troC).